Reading from the N-terminus, the 194-residue chain is Small ribosomal subunit protein eS7 (194 aa).

This sequence belongs to the eukaryotic ribosomal protein eS7 family.

The sequence is that of Small ribosomal subunit protein eS7 (RpS7) from Drosophila melanogaster (Fruit fly).